A 249-amino-acid chain; its full sequence is 5'-nucleotidase SurE (249 aa).

A divalent metal cation-binding residues include aspartate 9, aspartate 10, serine 40, and asparagine 92.

It belongs to the SurE nucleotidase family. The cofactor is a divalent metal cation.

It is found in the cytoplasm. The enzyme catalyses a ribonucleoside 5'-phosphate + H2O = a ribonucleoside + phosphate. Its function is as follows. Nucleotidase that shows phosphatase activity on nucleoside 5'-monophosphates. This Shewanella sp. (strain MR-4) protein is 5'-nucleotidase SurE.